The primary structure comprises 360 residues: Phenylalanine--tRNA ligase alpha subunit (360 aa).

E260 contacts Mg(2+).

It belongs to the class-II aminoacyl-tRNA synthetase family. Phe-tRNA synthetase alpha subunit type 1 subfamily. Tetramer of two alpha and two beta subunits. The cofactor is Mg(2+).

The protein localises to the cytoplasm. It catalyses the reaction tRNA(Phe) + L-phenylalanine + ATP = L-phenylalanyl-tRNA(Phe) + AMP + diphosphate + H(+). This is Phenylalanine--tRNA ligase alpha subunit from Agrobacterium fabrum (strain C58 / ATCC 33970) (Agrobacterium tumefaciens (strain C58)).